The primary structure comprises 270 residues: Transcription factor bHLH113 (270 aa).

Residues cysteine 109–alanine 153 form a disordered region. In terms of domain architecture, bHLH spans asparagine 144–leucine 193.

As to quaternary structure, homodimer.

The protein localises to the nucleus. This is Transcription factor bHLH113 (BHLH113) from Arabidopsis thaliana (Mouse-ear cress).